Reading from the N-terminus, the 365-residue chain is Pectate trisaccharide-lyase (365 aa).

A signal peptide spans 1-25; the sequence is MRFSRVVSLVLLLVFTAVLTGAVKA. Ca(2+)-binding residues include D142, D164, and D168. A PbH1 1 repeat occupies 149–171; the sequence is SHHIWIDHCTFVNGNDGAVDIKK. Residue R222 is part of the active site. One copy of the PbH1 2 repeat lies at 261–287; it reads GAKVHVEGNYFMGYGAVMAEAGIAFLP.

It belongs to the polysaccharide lyase 1 family. As to quaternary structure, homotetramer. It depends on Ca(2+) as a cofactor.

The protein localises to the secreted. The catalysed reaction is eliminative cleavage of unsaturated trigalacturonate as the major product from the reducing end of polygalacturonic acid/pectate.. Functionally, cleaves unsaturated trigalacturonate from pectin. Activity is highest towards polygalacturonic acid, activity on methylated pectins decreases with an increasing degree of methylation. This Thermotoga sp. (strain RQ2) protein is Pectate trisaccharide-lyase.